Reading from the N-terminus, the 157-residue chain is Transcription elongation factor GreA (157 aa).

Residues 47–75 are a coiled coil; the sequence is ENAEYDAAREKQGQIEDRITELENILSNA.

Belongs to the GreA/GreB family.

Functionally, necessary for efficient RNA polymerase transcription elongation past template-encoded arresting sites. The arresting sites in DNA have the property of trapping a certain fraction of elongating RNA polymerases that pass through, resulting in locked ternary complexes. Cleavage of the nascent transcript by cleavage factors such as GreA or GreB allows the resumption of elongation from the new 3'terminus. GreA releases sequences of 2 to 3 nucleotides. This Mycoplasmopsis pulmonis (strain UAB CTIP) (Mycoplasma pulmonis) protein is Transcription elongation factor GreA.